We begin with the raw amino-acid sequence, 334 residues long: MKAVNPLTENDVTPESLFNARRRTVLKMLGMSAAALSLPGAARADLLSWFKGGDRPRAASGRPLDFSQPQQFQANLPLTPEDKVTGYNNFYEFGLDKADPAAHAGTLKTADWKIEIDGEVAKPLTLSMDDIFKRFAQEQRIYRMRCVEGWSMVVPWVGFELGKLLQAAEPTSNARFVAFHTLYAPDQMPGQQDRFIGGGLDYPYVEGLRLDEAMHPLTLLTTGVYGKALPPQNGAPIRLTVPWKYGFKGIKSIVKISLVKAMPPTTWNQLAPNEYGFYANVNPHVDHPRWSQATERFIGSGGILDVQRQPTLLFNGYADQVASLYRGLDLRENF.

A signal peptide (tat-type signal) is located at residues 1–44 (MKAVNPLTENDVTPESLFNARRRTVLKMLGMSAAALSLPGAARA). Mo-molybdopterin is bound by residues asparagine 88, 91 to 92 (YE), cysteine 146, threonine 181, asparagine 233, arginine 238, and 249 to 251 (GIK).

It belongs to the MsrP family. In terms of assembly, heterodimer of a catalytic subunit (MsrP) and a heme-binding subunit (MsrQ). It depends on Mo-molybdopterin as a cofactor. Predicted to be exported by the Tat system. The position of the signal peptide cleavage has not been experimentally proven.

Its subcellular location is the periplasm. It catalyses the reaction L-methionyl-[protein] + a quinone + H2O = L-methionyl-(S)-S-oxide-[protein] + a quinol. It carries out the reaction L-methionyl-[protein] + a quinone + H2O = L-methionyl-(R)-S-oxide-[protein] + a quinol. In terms of biological role, part of the MsrPQ system that repairs oxidized periplasmic proteins containing methionine sulfoxide residues (Met-O), using respiratory chain electrons. Thus protects these proteins from oxidative-stress damage caused by reactive species of oxygen and chlorine generated by the host defense mechanisms. MsrPQ is essential for the maintenance of envelope integrity under bleach stress, rescuing a wide series of structurally unrelated periplasmic proteins from methionine oxidation. The catalytic subunit MsrP is non-stereospecific, being able to reduce both (R-) and (S-) diastereoisomers of methionine sulfoxide. This Erwinia tasmaniensis (strain DSM 17950 / CFBP 7177 / CIP 109463 / NCPPB 4357 / Et1/99) protein is Protein-methionine-sulfoxide reductase catalytic subunit MsrP.